Reading from the N-terminus, the 97-residue chain is uncharacterized protein (97 aa).

Residues 1–21 (MLLHGLGRMNIIFICFPSLAC) form the signal peptide.

This is an uncharacterized protein from Schizosaccharomyces pombe (strain 972 / ATCC 24843) (Fission yeast).